The following is a 374-amino-acid chain: Heat stress transcription factor A-8 (374 aa).

Residues 17-112 mediate DNA binding; sequence VAPFLRKCYD…LLKNVIRRKN (96 aa). Residues 126 to 192 form a hydrophobic repeat HR-A/B region; sequence TTYAQEKSGL…EMLSFLVMVM (67 aa). Residues 285–294 carry the AHA1 motif; sequence DGAWEKLLLL. A Nuclear localization signal motif is present at residues 298–303; it reads RKKTKK. Positions 330–339 match the AHA2 motif; it reads KSYMLKLISE. Positions 363–370 match the Nuclear export signal motif; sequence LTEQMELL.

Belongs to the HSF family. Class A subfamily. Homotrimer. Exhibits temperature-dependent phosphorylation.

The protein resides in the cytoplasm. It is found in the nucleus. Its function is as follows. Transcriptional activator that specifically binds DNA sequence 5'-AGAAnnTTCT-3' known as heat shock promoter elements (HSE). The sequence is that of Heat stress transcription factor A-8 (HSFA8) from Arabidopsis thaliana (Mouse-ear cress).